The sequence spans 350 residues: Inhibin beta E chain (350 aa).

An N-terminal signal peptide occupies residues 1-19; it reads MRLPDVQLWLVLLWALVRA. Residues 20–236 constitute a propeptide that is removed on maturation; the sequence is QGTGSVCPSC…EPGAGRARRR (217 aa). An N-linked (GlcNAc...) asparagine glycan is attached at N198. 4 cysteine pairs are disulfide-bonded: C240–C248, C247–C315, C276–C347, and C280–C349.

It belongs to the TGF-beta family. Homodimeric or heterodimeric through association with alpha and beta subunits, linked by one or more disulfide bonds. Inhibins are heterodimers of one alpha and one beta subunit. Activins are homo- or heterodimers of beta subunits only.

It localises to the secreted. Functionally, inhibins and activins inhibit and activate, respectively, the secretion of follitropin by the pituitary gland. Inhibins/activins are involved in regulating a number of diverse functions such as hypothalamic and pituitary hormone secretion, gonadal hormone secretion, germ cell development and maturation, erythroid differentiation, insulin secretion, nerve cell survival, embryonic axial development or bone growth, depending on their subunit composition. Inhibins appear to oppose the functions of activins. In terms of biological role, activin E is a homodimer of INHBE secreted by the liver that plays a crucial role in regulating metabolic homeostasis particularly in lipid metabolism and energy homeostasis. Plays a central role in the regulation of adipose tissue lipolysis by preventing the influx of fatty acids from adipose tissue into the liver. Mechanistically, signals via ACVR1C to activate SMAD2/3 signaling, suppressing PPARG target genes in adipose tissue, thereby reducing liver lipid content and improving glycemic control. Induces beige adipocyte formation and thermogenesis in response to cold exposure. The polypeptide is Inhibin beta E chain (INHBE) (Homo sapiens (Human)).